An 894-amino-acid chain; its full sequence is UPF0182 protein GSU2333 (894 aa).

The next 7 membrane-spanning stretches (helical) occupy residues 6 to 26 (FLLIIAAVFVVLPAALSLITF), 50 to 70 (VGAGLASGLFMFAFAMVNLYF), 98 to 118 (MVQMVKPLSILAALVLSLLAG), 162 to 182 (KGFVAFTVLVTGIMVGAVYFF), 203 to 223 (LAILLGIFSLTLATGFYLDAV), 250 to 270 (ILTLATPLAGAVVAFGLWKGA), and 275 to 295 (LIPPIIVAAVYGIGIVGYPAM).

Belongs to the UPF0182 family.

The protein resides in the cell membrane. In Geobacter sulfurreducens (strain ATCC 51573 / DSM 12127 / PCA), this protein is UPF0182 protein GSU2333.